We begin with the raw amino-acid sequence, 129 residues long: Large ribosomal subunit protein bL19 (129 aa).

It belongs to the bacterial ribosomal protein bL19 family.

Functionally, this protein is located at the 30S-50S ribosomal subunit interface and may play a role in the structure and function of the aminoacyl-tRNA binding site. This Burkholderia mallei (strain NCTC 10247) protein is Large ribosomal subunit protein bL19.